The chain runs to 67 residues: Conotoxin Cl6.10 (67 aa).

A signal peptide spans 1-24 (MKLTCVLIAAVLLLAVCQLDSADA). Residues 25–37 (TAYMRKDPSLRSP) constitute a propeptide that is removed on maturation. Disulfide bonds link Cys43/Cys57, Cys50/Cys61, and Cys56/Cys65.

The protein belongs to the conotoxin O1 superfamily. Expressed by the venom duct.

Its subcellular location is the secreted. The sequence is that of Conotoxin Cl6.10 from Californiconus californicus (California cone).